A 267-amino-acid polypeptide reads, in one-letter code: MRAGEALRRLGERRPLVHHITNYVSVGLVANATLCTGALPVMAHAREEVAEMSGAAGALVLNIGTLDERQVESMLAAGRAANERGIPVILDPVGAGATALRTRTAGRLLSELEVSAVCGNAGEIATLAGLAAEVRGVESIGGDAREAALKAASSLGLTVAATGAVDYVCGGGRALAVENGHPLLGRVVGSGCASTAVVGCFAAAAGSADPETVAHALAYFGCAGEEAARGAGGPGTFEARLLDALAALSSDPSRLSGRLRVGDAGAG.

Position 42 (Met-42) interacts with substrate. ATP is bound by residues Cys-118 and Thr-162. Gly-189 lines the substrate pocket.

Belongs to the Thz kinase family. It depends on Mg(2+) as a cofactor.

It catalyses the reaction 5-(2-hydroxyethyl)-4-methylthiazole + ATP = 4-methyl-5-(2-phosphooxyethyl)-thiazole + ADP + H(+). It functions in the pathway cofactor biosynthesis; thiamine diphosphate biosynthesis; 4-methyl-5-(2-phosphoethyl)-thiazole from 5-(2-hydroxyethyl)-4-methylthiazole: step 1/1. In terms of biological role, catalyzes the phosphorylation of the hydroxyl group of 4-methyl-5-beta-hydroxyethylthiazole (THZ). In Rubrobacter xylanophilus (strain DSM 9941 / JCM 11954 / NBRC 16129 / PRD-1), this protein is Hydroxyethylthiazole kinase.